The following is a 128-amino-acid chain: Profilin (128 aa).

Belongs to the profilin family.

Its function is as follows. More likely to influence phosphoinositide metabolism than actin assembly. This Homo sapiens (Human) protein is Profilin.